Consider the following 262-residue polypeptide: Phosphatidylglycerol--prolipoprotein diacylglyceryl transferase (262 aa).

4 helical membrane passes run 17–37 (LAIHWYGLMYLIGFALVYALG), 57–77 (LIFYSVLGVVLGGRLGYVLFY), 95–115 (GGMSFHGGLIGVIVVMLLFAH), and 119–139 (LGFFTVSDFIAPLIPLGLAAG). Residue arginine 140 participates in a 1,2-diacyl-sn-glycero-3-phospho-(1'-sn-glycerol) binding. 3 consecutive transmembrane segments (helical) span residues 173–193 (PSQLYELGLEGIVLFALLWWY), 200–220 (AGQVSAMFLMGYGAFRFLVEF), and 227–247 (FLGLLAAGLSMGQWLSIPMVL).

It belongs to the Lgt family.

It localises to the cell inner membrane. It carries out the reaction L-cysteinyl-[prolipoprotein] + a 1,2-diacyl-sn-glycero-3-phospho-(1'-sn-glycerol) = an S-1,2-diacyl-sn-glyceryl-L-cysteinyl-[prolipoprotein] + sn-glycerol 1-phosphate + H(+). Its pathway is protein modification; lipoprotein biosynthesis (diacylglyceryl transfer). In terms of biological role, catalyzes the transfer of the diacylglyceryl group from phosphatidylglycerol to the sulfhydryl group of the N-terminal cysteine of a prolipoprotein, the first step in the formation of mature lipoproteins. This chain is Phosphatidylglycerol--prolipoprotein diacylglyceryl transferase, found in Bordetella bronchiseptica (strain ATCC BAA-588 / NCTC 13252 / RB50) (Alcaligenes bronchisepticus).